The following is a 473-amino-acid chain: ATP synthase subunit beta (473 aa).

158–165 (GGAGVGKT) serves as a coordination point for ATP.

This sequence belongs to the ATPase alpha/beta chains family. F-type ATPases have 2 components, CF(1) - the catalytic core - and CF(0) - the membrane proton channel. CF(1) has five subunits: alpha(3), beta(3), gamma(1), delta(1), epsilon(1). CF(0) has three main subunits: a(1), b(2) and c(9-12). The alpha and beta chains form an alternating ring which encloses part of the gamma chain. CF(1) is attached to CF(0) by a central stalk formed by the gamma and epsilon chains, while a peripheral stalk is formed by the delta and b chains. The F(1)F(0) complex interacts with SpoIIIJ and YqjG; YqgA is found in the same complex.

It localises to the cell membrane. It is found in the membrane raft. It catalyses the reaction ATP + H2O + 4 H(+)(in) = ADP + phosphate + 5 H(+)(out). Its function is as follows. Produces ATP from ADP in the presence of a proton gradient across the membrane. The catalytic sites are hosted primarily by the beta subunits. The polypeptide is ATP synthase subunit beta (Bacillus subtilis (strain 168)).